Here is a 379-residue protein sequence, read N- to C-terminus: Alkanesulfonate monooxygenase (379 aa).

It belongs to the SsuD family.

It catalyses the reaction an alkanesulfonate + FMNH2 + O2 = an aldehyde + FMN + sulfite + H2O + 2 H(+). Functionally, catalyzes the desulfonation of aliphatic sulfonates. The chain is Alkanesulfonate monooxygenase from Pseudomonas syringae pv. tomato (strain ATCC BAA-871 / DC3000).